Here is a 92-residue protein sequence, read N- to C-terminus: Small ribosomal subunit protein uS19c (92 aa).

The protein belongs to the universal ribosomal protein uS19 family.

The protein resides in the plastid. It localises to the chloroplast. Its function is as follows. Protein S19 forms a complex with S13 that binds strongly to the 16S ribosomal RNA. This chain is Small ribosomal subunit protein uS19c, found in Morus indica (Mulberry).